Consider the following 999-residue polypeptide: Embryonic polarity protein dorsal (999 aa).

The disordered stretch occupies residues Met1–Arg44. An RHD domain is found at Pro47–Lys342. Ser312 carries the post-translational modification Phosphoserine; by PKA. 2 disordered regions span residues Phe389–Thr424 and Gln670–Gly851. A compositionally biased stretch (low complexity) spans Glu402 to Thr424. The Nuclear export signal signature appears at Asn668–Pro677. A compositionally biased stretch (pro residues) spans Pro677 to Pro686. Positions Lys710–Ser719 are enriched in basic and acidic residues. Residues Ile720–Ser734 show a composition bias toward polar residues. The short motif at Lys756 to Asp773 is the Nuclear localization signal element. Low complexity-rich tracts occupy residues Ser819 to Val829 and Ser836 to Gly851.

Interacts with tamo via the nuclear localization signal. Interacts with emb, a component of the nuclear export complex. In unchallenged larvae, expression of both isoforms is seen in fat body and gut (isoform A is more abundant). After immune challenge levels of both isoforms are enhanced.

It localises to the cytoplasm. Its subcellular location is the nucleus. Embryonic developmental transcription factor. The lateral or ventral identity of a cell depends upon the concentration of this protein in its nucleus during the blastoderm stage. Acts as a morphogenetic transcription factor that specifically binds to the kappa-B-related consensus sequence 5'-GRGAAAANCC-3', located in the enhancer region of zygotic genes such as Zen, Twist, Snail and Decapentaplegic, promoting their expression. Part of a signaling pathway involving NF-kappa-B and Toll-related receptors, that functions in the apoptosis of unfit cells during cell competition. Mediates an immune response in larvae. May be part of a NF-kappa-B and Tollo signaling cascade that regulates development of the peripheral nervous system. This is Embryonic polarity protein dorsal (dl) from Drosophila melanogaster (Fruit fly).